We begin with the raw amino-acid sequence, 430 residues long: tRNA(Ile)-lysidine synthase (430 aa).

Residue 21–26 coordinates ATP; that stretch reads SGGLDS.

This sequence belongs to the tRNA(Ile)-lysidine synthase family.

It localises to the cytoplasm. The catalysed reaction is cytidine(34) in tRNA(Ile2) + L-lysine + ATP = lysidine(34) in tRNA(Ile2) + AMP + diphosphate + H(+). Ligates lysine onto the cytidine present at position 34 of the AUA codon-specific tRNA(Ile) that contains the anticodon CAU, in an ATP-dependent manner. Cytidine is converted to lysidine, thus changing the amino acid specificity of the tRNA from methionine to isoleucine. This Salmonella dublin (strain CT_02021853) protein is tRNA(Ile)-lysidine synthase.